The primary structure comprises 656 residues: DNA ligase (656 aa).

NAD(+)-binding positions include 32 to 36 (DAVYD) and 81 to 82 (SL). The active-site N6-AMP-lysine intermediate is the Lys-112. NAD(+) is bound by residues Arg-133, Glu-167, and Lys-306. 4 residues coordinate Zn(2+): Cys-400, Cys-403, Cys-416, and Cys-421. Residues 577 to 656 (ESSSVFSNKT…ELLKRLKEFD (80 aa)) enclose the BRCT domain.

It belongs to the NAD-dependent DNA ligase family. LigA subfamily. Mg(2+) serves as cofactor. The cofactor is Mn(2+).

The enzyme catalyses NAD(+) + (deoxyribonucleotide)n-3'-hydroxyl + 5'-phospho-(deoxyribonucleotide)m = (deoxyribonucleotide)n+m + AMP + beta-nicotinamide D-nucleotide.. Functionally, DNA ligase that catalyzes the formation of phosphodiester linkages between 5'-phosphoryl and 3'-hydroxyl groups in double-stranded DNA using NAD as a coenzyme and as the energy source for the reaction. It is essential for DNA replication and repair of damaged DNA. This is DNA ligase from Helicobacter pylori (strain Shi470).